Here is a 35-residue protein sequence, read N- to C-terminus: Dermonecrotic toxin LdSicTox-alpha-1 (35 aa).

The active site involves H11. Residues E31 and D33 each coordinate Mg(2+).

Belongs to the arthropod phospholipase D family. Class I subfamily. Mg(2+) is required as a cofactor. Post-translationally, contains 1 disulfide bond. As to expression, expressed by the venom gland.

The protein localises to the secreted. It catalyses the reaction an N-(acyl)-sphingosylphosphocholine = an N-(acyl)-sphingosyl-1,3-cyclic phosphate + choline. The catalysed reaction is an N-(acyl)-sphingosylphosphoethanolamine = an N-(acyl)-sphingosyl-1,3-cyclic phosphate + ethanolamine. The enzyme catalyses a 1-acyl-sn-glycero-3-phosphocholine = a 1-acyl-sn-glycero-2,3-cyclic phosphate + choline. It carries out the reaction a 1-acyl-sn-glycero-3-phosphoethanolamine = a 1-acyl-sn-glycero-2,3-cyclic phosphate + ethanolamine. Its function is as follows. Dermonecrotic toxins cleave the phosphodiester linkage between the phosphate and headgroup of certain phospholipids (sphingolipid and lysolipid substrates), forming an alcohol (often choline) and a cyclic phosphate. This toxin acts on sphingomyelin (SM). It may also act on ceramide phosphoethanolamine (CPE), lysophosphatidylcholine (LPC) and lysophosphatidylethanolamine (LPE), but not on lysophosphatidylserine (LPS), and lysophosphatidylglycerol (LPG). It acts by transphosphatidylation, releasing exclusively cyclic phosphate products as second products. Induces dermonecrosis, hemolysis, increased vascular permeability, edema, inflammatory response, and platelet aggregation. This Loxosceles deserta (Desert recluse spider) protein is Dermonecrotic toxin LdSicTox-alpha-1.